Reading from the N-terminus, the 287-residue chain is Putative glutamate--cysteine ligase regulatory subunit (287 aa).

The protein belongs to the aldo/keto reductase family. Glutamate--cysteine ligase light chain subfamily. Heterodimer of a catalytic heavy chain and a regulatory light chain.

It is found in the cytoplasm. It participates in sulfur metabolism; glutathione biosynthesis; glutathione from L-cysteine and L-glutamate: step 1/2. The polypeptide is Putative glutamate--cysteine ligase regulatory subunit (Schizosaccharomyces pombe (strain 972 / ATCC 24843) (Fission yeast)).